The primary structure comprises 199 residues: uncharacterized protein (199 aa).

Transmembrane regions (helical) follow at residues 10–32 (LTSQ…FIGY), 37–59 (VYSA…INYY), 63–80 (LIVI…FALI), 83–100 (LGLI…GVYL), 104–121 (YQVY…INLF), 126–148 (LTVL…MGIT), and 163–185 (FDAI…TGII).

The protein resides in the cell membrane. This is an uncharacterized protein from Archaeoglobus fulgidus (strain ATCC 49558 / DSM 4304 / JCM 9628 / NBRC 100126 / VC-16).